Consider the following 528-residue polypeptide: MWRRQHALLRRISLPKPPAATGIGCYYATEPEGRKPKTAPLQSRGMVDRFRLRAKGGDGGNGCISLRRSRSDRQGKPDGGNGGRGGDVILECSRSVWDFSGLQHHMKASRGANGVSKNQIGTRGSDKIAQVPVGTVIHLVEGEQPSLSVNKPTRALDPWDIPDAVEHSPFSSSRIGSKMMKGLDSSRSSQHISSKKNTAENDCERGNRNHRGKEPYYMTEFVRTEDYDGTSYPHQVGVDENDQFDDEDDEFWEDDEEELDMEEVTEEKEEEEDVRYSVAEMTKPGQRLIIARGGEGGLGNACILKEMWLSKAHKEEEMASLSTGHPGTETYLILELKSIADVGLVGMPNAGKSTLLSALSRARPEIADYAFTTLRPNIGSLTYEDYFSVKVADIPGLIKGAHENRGLGHAFLRHIERTKVLAYVLDLAATLNGRKGVPPWEQLRDLVVELEHYQEGLTKRPSLIVANKIDEEGADEMYEELKKRVQGVPMFPICAILQEGVPDLRVGLRDLMDASDPQGIELSKIVVD.

Residues 1–45 (MWRRQHALLRRISLPKPPAATGIGCYYATEPEGRKPKTAPLQSRG) constitute a mitochondrion transit peptide. The Obg domain occupies 46 to 339 (MVDRFRLRAK…TYLILELKSI (294 aa)). Disordered stretches follow at residues 52-87 (LRAK…RGGD) and 167-212 (HSPF…NHRG). Residues 77 to 86 (PDGGNGGRGG) show a composition bias toward gly residues. Over residues 197–207 (NTAENDCERGN) the composition is skewed to basic and acidic residues. Residues 340–513 (ADVGLVGMPN…LRVGLRDLMD (174 aa)) form the OBG-type G domain. GTP contacts are provided by residues 346-353 (GMPNAGKS) and 393-397 (DIPGL).

Belongs to the TRAFAC class OBG-HflX-like GTPase superfamily. OBG GTPase family.

It localises to the mitochondrion. Functionally, may bind GTP and have GTPase activity. The polypeptide is Probable GTP-binding protein OBGM, mitochondrial (OBGM) (Oryza sativa subsp. japonica (Rice)).